The following is a 398-amino-acid chain: Phospholipase C (398 aa).

A signal peptide spans 1-28 (MKRKIYKLLICATIATSLWAVRTTKVYA). Positions 29, 39, 84, 96, 154, 158, 164, 176, and 180 each coordinate Zn(2+). The region spanning 29–278 (WDGKADGTGT…HDVSDGKDSS (250 aa)) is the Zn-dependent PLC domain. The tract at residues 275–283 (KDSSANKNV) is linker. Residues 284-398 (NELVAYITTG…ISGNSTYNIK (115 aa)) form the PLAT domain. Ca(2+) contacts are provided by G299, T300, D301, D321, N322, G324, N325, D326, and D365.

Ca(2+) serves as cofactor. Requires Zn(2+) as cofactor.

Its subcellular location is the secreted. The enzyme catalyses a 1,2-diacyl-sn-glycero-3-phosphocholine + H2O = phosphocholine + a 1,2-diacyl-sn-glycerol + H(+). Bacterial hemolysins are exotoxins that attack blood cell membranes and cause cell rupture. Constitutes an essential virulence factor in gas gangrene. Binds to eukaryotic membranes where it hydrolyzes both phosphatidylcholine and sphingomyelin, causing cell rupture. The diacylglycerol produced can activate both the arachidonic acid pathway, leading to modulation of the inflammatory response cascade and thrombosis, and protein kinase C, leading to activation of eukaryotic phospholipases and further membrane damage. The chain is Phospholipase C (plc) from Clostridium perfringens.